A 521-amino-acid chain; its full sequence is MRLEVFCQDRIGLARELLDLLVARSIDLRGIEVAASGRIYLNFSTLEFEQFSNLMAEIRRTPGVTDVRTVPYMPSEREHRVLSALLVAMPEPVFSVDLRTKVELANPAAQNLFNLDENKIRNFTADHLINGFNFARWLESERVQAQAQHVVIEGRDFLMEAHPIYLSEDNDQADQLVGAMVMLKSTARMGRQLQNLVVTDETEFDHIVAVTPRMRQVVEQARKLAMHDAPLLIIGDTGTGKDMLARACHLRSARGKMPFLALNCASLPDDVAESELFGHAAGAYPNALEGKKGFFEQANGGSVLLDEIGEMSPTMQTKLLRFLNDGTFRRVGEEHEVHVNVRVICATQKNLFELVQRGEFREDLFYRLNVLTLNLPPLRERVQDIMPLTEIFVARFADEQGIPRPRLSSQLNAFLMRYNWPGNVRQLKNALYRALTQLEGHELRPQDIVLPEQALDVSLGEEAMEGTLDQITSRFERSILTRLYLSYPSTRKLAKRLGVSHTAIANKLREYGLGQKRGDNE.

One can recognise an ACT domain in the interval Arg2–Tyr72. The PAS domain occupies Glu78 to Ile120. In terms of domain architecture, Sigma-54 factor interaction spans Ile207–Thr436. Residues Gly235 to Asp242 and Ala298 to Glu307 each bind ATP. A DNA-binding region (H-T-H motif) is located at residues Ser489–Arg509.

In terms of assembly, homodimer. In presence of tyrosine (or high concentrations of phenylalanine or tryptophan) and ATP, it self-associates to form an hexamer.

It is found in the cytoplasm. In terms of biological role, dual transcriptional regulator of the TyrR regulon, which includes a number of genes coding for proteins involved in the biosynthesis or transport of the three aromatic amino acids, phenylalanine, tyrosine and tryptophan. These three aromatic amino acids act as effectors which bind to the TyrR protein to form an active regulatory protein. Acts by binding specifically to TyrR boxes in the promoter region of the target genes. The polypeptide is HTH-type transcriptional regulatory protein TyrR (Enterobacter agglomerans (Erwinia herbicola)).